Consider the following 1364-residue polypeptide: Kinectin (1364 aa).

Over 1-6 the chain is Cytoplasmic; it reads MEFYES. Residues 7 to 29 form a helical; Signal-anchor for type II membrane protein membrane-spanning segment; it reads TYFIILIPSVVITVIFLFFWLFM. At 30-1364 the chain is on the lumenal side; that stretch reads KETLYDEVLA…KGREHYQLVE (1335 aa). Basic and acidic residues-rich tracts occupy residues 46–56, 73–86, 121–135, and 170–179; these read KFPPTKSDKKK, HESDSESTPRDFKL, QKAAQDDHVTKESEG, and QKNDDQDTKT. Positions 46-207 are disordered; the sequence is KFPPTKSDKK…VKQENVSGKK (162 aa). Residues asparagine 202, asparagine 267, asparagine 623, asparagine 638, asparagine 704, asparagine 775, asparagine 976, asparagine 1061, asparagine 1088, and asparagine 1094 are each glycosylated (N-linked (GlcNAc...) asparagine). Positions 315–1085 form a coiled coil; that stretch reads KASKAESAAA…VETRELLQKL (771 aa). Residues 1116–1306 are a coiled coil; that stretch reads SGSEDIKVME…ASLEREIGKV (191 aa).

The protein belongs to the kinectin family. Parallel homodimers formed between the membrane-bound and the cytosolic form, and also between 2 cytosolic forms. Post-translationally, both the membrane and cytoplasmic forms seem to be myristoylated.

The protein localises to the endoplasmic reticulum membrane. Receptor for kinesin thus involved in kinesin-driven vesicle motility. In Gallus gallus (Chicken), this protein is Kinectin (KTN1).